A 399-amino-acid polypeptide reads, in one-letter code: UDP-N-acetylglucosamine--N-acetylmuramyl-(pentapeptide) pyrophosphoryl-undecaprenol N-acetylglucosamine transferase (399 aa).

The segment at 1–31 (MTSRFGHSQHPRRGRSARARAGRREGVQSNF) is disordered. Residues 7–21 (HSQHPRRGRSARARA) show a composition bias toward basic residues. Residues 58-60 (TGG), asparagine 170, arginine 206, serine 234, isoleucine 288, and glutamine 333 contribute to the UDP-N-acetyl-alpha-D-glucosamine site.

This sequence belongs to the glycosyltransferase 28 family. MurG subfamily.

Its subcellular location is the cell inner membrane. It carries out the reaction di-trans,octa-cis-undecaprenyl diphospho-N-acetyl-alpha-D-muramoyl-L-alanyl-D-glutamyl-meso-2,6-diaminopimeloyl-D-alanyl-D-alanine + UDP-N-acetyl-alpha-D-glucosamine = di-trans,octa-cis-undecaprenyl diphospho-[N-acetyl-alpha-D-glucosaminyl-(1-&gt;4)]-N-acetyl-alpha-D-muramoyl-L-alanyl-D-glutamyl-meso-2,6-diaminopimeloyl-D-alanyl-D-alanine + UDP + H(+). The protein operates within cell wall biogenesis; peptidoglycan biosynthesis. Cell wall formation. Catalyzes the transfer of a GlcNAc subunit on undecaprenyl-pyrophosphoryl-MurNAc-pentapeptide (lipid intermediate I) to form undecaprenyl-pyrophosphoryl-MurNAc-(pentapeptide)GlcNAc (lipid intermediate II). The sequence is that of UDP-N-acetylglucosamine--N-acetylmuramyl-(pentapeptide) pyrophosphoryl-undecaprenol N-acetylglucosamine transferase from Acidovorax sp. (strain JS42).